A 102-amino-acid polypeptide reads, in one-letter code: Citrate lyase acyl carrier protein (102 aa).

At Ser14 the chain carries O-(phosphoribosyl dephospho-coenzyme A)serine.

It belongs to the CitD family. As to quaternary structure, oligomer with a subunit composition of (alpha,beta,gamma)6.

It is found in the cytoplasm. Its function is as follows. Covalent carrier of the coenzyme of citrate lyase. In Serratia proteamaculans (strain 568), this protein is Citrate lyase acyl carrier protein.